A 67-amino-acid polypeptide reads, in one-letter code: Beta-mammal toxin CeII9 (67 aa).

The LCN-type CS-alpha/beta domain maps to 1–66; the sequence is KEGYLVNHST…VWPLPKKTCN (66 aa). 4 disulfides stabilise this stretch: cysteine 12–cysteine 65, cysteine 16–cysteine 41, cysteine 25–cysteine 46, and cysteine 29–cysteine 48.

The protein belongs to the long (4 C-C) scorpion toxin superfamily. Sodium channel inhibitor family. Beta subfamily. As to expression, expressed by the venom gland.

Its subcellular location is the secreted. Beta toxins bind at site-4 of sodium channels and shift the voltage of activation toward more negative potentials thereby affecting sodium channel activation and promoting spontaneous and repetitive firing. This toxin is active against mammals and lethal to mice. Selectively modulates Nav1.4/SCN4A, a sodium channel present in both denervated and innervated skeletal muscle. The chain is Beta-mammal toxin CeII9 from Centruroides elegans (Bark scorpion).